We begin with the raw amino-acid sequence, 552 residues long: Membrane protein insertase YidC (552 aa).

Residues 3 to 23 (IKRTVLWVIFFMSAVMLFDNW) traverse the membrane as a helical segment. Residues 35–59 (PSATPTKTVGSAAPGTTTPGTQPAD) are disordered. The span at 42–59 (TVGSAAPGTTTPGTQPAD) shows a compositional bias: low complexity. Helical transmembrane passes span 364–384 (WGWS…PLSA), 430–450 (FGGC…YWVL), and 504–524 (MMFM…GLVL).

Belongs to the OXA1/ALB3/YidC family. Type 1 subfamily. As to quaternary structure, interacts with the Sec translocase complex via SecD. Specifically interacts with transmembrane segments of nascent integral membrane proteins during membrane integration.

The protein resides in the cell inner membrane. Its function is as follows. Required for the insertion and/or proper folding and/or complex formation of integral membrane proteins into the membrane. Involved in integration of membrane proteins that insert both dependently and independently of the Sec translocase complex, as well as at least some lipoproteins. Aids folding of multispanning membrane proteins. This is Membrane protein insertase YidC from Paraburkholderia phytofirmans (strain DSM 17436 / LMG 22146 / PsJN) (Burkholderia phytofirmans).